We begin with the raw amino-acid sequence, 432 residues long: Probable exopolygalacturonase X (432 aa).

A signal peptide spans 1–23 (MKFSYSFVQVVTLLLSLSPSVEG). Asn-113, Asn-129, and Asn-199 each carry an N-linked (GlcNAc...) asparagine glycan. The PbH1 1 repeat unit spans residues 231–252 (SDNIVIQNSVINNGDDCVSFKP). The active-site Proton donor is the Asp-245. Cys-247 and Cys-264 form a disulfide bridge. N-linked (GlcNAc...) asparagine glycans are attached at residues Asn-253 and Asn-265. PbH1 repeat units lie at residues 254–274 (STNI…SVGS), 285–306 (VQNV…RIKV), and 327–348 (VKNV…EVTQ). Residue His-268 is part of the active site. Asn-292, Asn-297, Asn-329, Asn-354, and Asn-364 each carry an N-linked (GlcNAc...) asparagine glycan. One copy of the PbH1 5 repeat lies at 362-394 (PSNLTISDIHFKNFRGTTSGKRDPNVGTIVCSS). Residues Cys-392 and Cys-398 are joined by a disulfide bond.

Belongs to the glycosyl hydrolase 28 family.

The protein localises to the secreted. The catalysed reaction is [(1-&gt;4)-alpha-D-galacturonosyl](n) + H2O = alpha-D-galacturonate + [(1-&gt;4)-alpha-D-galacturonosyl](n-1). Its function is as follows. Specific in hydrolyzing the terminal glycosidic bond of polygalacturonic acid and oligogalacturonates. This is Probable exopolygalacturonase X (pgaX) from Aspergillus fumigatus (strain CBS 144.89 / FGSC A1163 / CEA10) (Neosartorya fumigata).